The sequence spans 107 residues: Heme-degrading monooxygenase (107 aa).

In terms of domain architecture, ABM spans 2-94; the sequence is IIVTNTTKIT…YILDNKIAYY (93 aa). Asn6 is a Fe cation binding site. His76 is a binding site for heme.

The protein belongs to the antibiotic biosynthesis monooxygenase family. Heme-degrading monooxygenase IsdG subfamily. In terms of assembly, homodimer.

The protein localises to the cytoplasm. The catalysed reaction is heme b + 3 reduced [NADPH--hemoprotein reductase] + 3 O2 = biliverdin IXalpha + CO + Fe(2+) + 3 oxidized [NADPH--hemoprotein reductase] + 3 H2O + H(+). Its function is as follows. Allows bacterial pathogens to use the host heme as an iron source. Catalyzes the oxidative degradation of the heme macrocyclic porphyrin ring to the biliverdin in the presence of a suitable electron donor such as ascorbate or NADPH--cytochrome P450 reductase, with subsequent release of free iron. This is Heme-degrading monooxygenase from Bacillus mycoides (strain KBAB4) (Bacillus weihenstephanensis).